Here is a 170-residue protein sequence, read N- to C-terminus: Large ribosomal subunit protein uL6m (170 aa).

Belongs to the universal ribosomal protein uL6 family.

It localises to the mitochondrion. This Dictyostelium discoideum (Social amoeba) protein is Large ribosomal subunit protein uL6m (mrpl6).